Reading from the N-terminus, the 68-residue chain is MIILSNKPNIRGIKNVVEDIKYRNQLIGRDGRLFAGLIATRISGIAIGFLLAVLLVGVPAMMSILGVI.

The chain crosses the membrane as a helical span at residues 45 to 65; it reads IAIGFLLAVLLVGVPAMMSIL.

Belongs to the MtrF family. As to quaternary structure, the complex is composed of 8 subunits; MtrA, MtrB, MtrC, MtrD, MtrE, MtrF, MtrG and MtrH.

The protein localises to the cell membrane. The enzyme catalyses 5-methyl-5,6,7,8-tetrahydromethanopterin + coenzyme M + 2 Na(+)(in) = 5,6,7,8-tetrahydromethanopterin + methyl-coenzyme M + 2 Na(+)(out). Its pathway is one-carbon metabolism; methanogenesis from CO(2); methyl-coenzyme M from 5,10-methylene-5,6,7,8-tetrahydromethanopterin: step 2/2. Functionally, part of a complex that catalyzes the formation of methyl-coenzyme M and tetrahydromethanopterin from coenzyme M and methyl-tetrahydromethanopterin. This is an energy-conserving, sodium-ion translocating step. This Methanothermobacter marburgensis (strain ATCC BAA-927 / DSM 2133 / JCM 14651 / NBRC 100331 / OCM 82 / Marburg) (Methanobacterium thermoautotrophicum) protein is Tetrahydromethanopterin S-methyltransferase subunit F (mtrF).